A 291-amino-acid polypeptide reads, in one-letter code: UDP-N-acetylenolpyruvoylglucosamine reductase (291 aa).

Residues 19–186 (GIGGPAEWIA…VSARLKLASG (168 aa)) enclose the FAD-binding PCMH-type domain. The active site involves R165. The active-site Proton donor is S215. E285 is an active-site residue.

Belongs to the MurB family. FAD is required as a cofactor.

Its subcellular location is the cytoplasm. The enzyme catalyses UDP-N-acetyl-alpha-D-muramate + NADP(+) = UDP-N-acetyl-3-O-(1-carboxyvinyl)-alpha-D-glucosamine + NADPH + H(+). It participates in cell wall biogenesis; peptidoglycan biosynthesis. In terms of biological role, cell wall formation. In Prochlorococcus marinus (strain NATL2A), this protein is UDP-N-acetylenolpyruvoylglucosamine reductase.